Consider the following 250-residue polypeptide: DNA repair protein RecO (250 aa).

This sequence belongs to the RecO family.

In terms of biological role, involved in DNA repair and RecF pathway recombination. The polypeptide is DNA repair protein RecO (Lactobacillus acidophilus (strain ATCC 700396 / NCK56 / N2 / NCFM)).